Here is a 120-residue protein sequence, read N- to C-terminus: Ribonuclease P protein component 2 (120 aa).

This sequence belongs to the eukaryotic/archaeal RNase P protein component 2 family. In terms of assembly, consists of a catalytic RNA component and at least 4-5 protein subunits.

Its subcellular location is the cytoplasm. The enzyme catalyses Endonucleolytic cleavage of RNA, removing 5'-extranucleotides from tRNA precursor.. Functionally, part of ribonuclease P, a protein complex that generates mature tRNA molecules by cleaving their 5'-ends. This chain is Ribonuclease P protein component 2, found in Thermococcus kodakarensis (strain ATCC BAA-918 / JCM 12380 / KOD1) (Pyrococcus kodakaraensis (strain KOD1)).